The following is a 113-amino-acid chain: Large ribosomal subunit protein bL17 (113 aa).

It belongs to the bacterial ribosomal protein bL17 family. Part of the 50S ribosomal subunit. Contacts protein L32.

This is Large ribosomal subunit protein bL17 from Clostridium botulinum (strain Loch Maree / Type A3).